The primary structure comprises 205 residues: Thymidine kinase (205 aa).

Residues 9 to 16 and 88 to 91 contribute to the ATP site; these read SAMNAGKT and DECH. Glutamate 89 (proton acceptor) is an active-site residue. The Zn(2+) site is built by cysteine 146, cysteine 148, cysteine 183, and histidine 186.

It belongs to the thymidine kinase family. Homotetramer.

It is found in the cytoplasm. The catalysed reaction is thymidine + ATP = dTMP + ADP + H(+). The polypeptide is Thymidine kinase (Blochmanniella pennsylvanica (strain BPEN)).